Consider the following 330-residue polypeptide: Aspartate--ammonia ligase (330 aa).

Belongs to the class-II aminoacyl-tRNA synthetase family. AsnA subfamily.

Its subcellular location is the cytoplasm. The catalysed reaction is L-aspartate + NH4(+) + ATP = L-asparagine + AMP + diphosphate + H(+). It functions in the pathway amino-acid biosynthesis; L-asparagine biosynthesis; L-asparagine from L-aspartate (ammonia route): step 1/1. In Haemophilus influenzae (strain PittGG), this protein is Aspartate--ammonia ligase.